The sequence spans 65 residues: Large ribosomal subunit protein bL33m (65 aa).

Residues 1 to 8 (MFLSAVTF) constitute a mitochondrion transit peptide.

It belongs to the bacterial ribosomal protein bL33 family. In terms of assembly, component of the mitochondrial ribosome large subunit (39S) which comprises a 16S rRNA and about 50 distinct proteins.

The protein resides in the mitochondrion. In Bos taurus (Bovine), this protein is Large ribosomal subunit protein bL33m (MRPL33).